The following is a 134-amino-acid chain: Ribosome-binding factor A (134 aa).

The protein belongs to the RbfA family. As to quaternary structure, monomer. Binds 30S ribosomal subunits, but not 50S ribosomal subunits or 70S ribosomes.

It localises to the cytoplasm. In terms of biological role, one of several proteins that assist in the late maturation steps of the functional core of the 30S ribosomal subunit. Associates with free 30S ribosomal subunits (but not with 30S subunits that are part of 70S ribosomes or polysomes). Required for efficient processing of 16S rRNA. May interact with the 5'-terminal helix region of 16S rRNA. The sequence is that of Ribosome-binding factor A from Psychrobacter cryohalolentis (strain ATCC BAA-1226 / DSM 17306 / VKM B-2378 / K5).